We begin with the raw amino-acid sequence, 407 residues long: Peptidase T (407 aa).

Histidine 78 lines the Zn(2+) pocket. Aspartate 80 is an active-site residue. Aspartate 139 contributes to the Zn(2+) binding site. The active-site Proton acceptor is glutamate 173. Zn(2+)-binding residues include glutamate 174, aspartate 196, and histidine 378.

The protein belongs to the peptidase M20B family. It depends on Zn(2+) as a cofactor.

It localises to the cytoplasm. The catalysed reaction is Release of the N-terminal residue from a tripeptide.. In terms of biological role, cleaves the N-terminal amino acid of tripeptides. This is Peptidase T from Shewanella halifaxensis (strain HAW-EB4).